A 1178-amino-acid polypeptide reads, in one-letter code: Phosphate system positive regulatory protein PHO81 (1178 aa).

The region spanning 1 to 169 (MKFGKYLEAR…QSHDKDFYLA (169 aa)) is the SPX domain. Positions 210-250 (QSSTFTNDDDDDNNTSNNNKHNNNNNNNNNNNNNNNNNNIL) are disordered. Low complexity predominate over residues 223–250 (NTSNNNKHNNNNNNNNNNNNNNNNNNIL). 6 ANK repeats span residues 423-452 (HSRVPLHYAAELGKLEFVHSLLITNLLEDV), 458-487 (DSKTPLVLAITNNHIDVVRDLLTIGGANAS), 506-535 (VQFDPLNVACKFNNHDAAKLLLEIRSKQNA), 556-586 (TGLCTLHIVAKIGGDPQLIQLLIRYGADPNE), 591-620 (NKWTPIFYAVRSGHSEVITELLKHNARLDI), and 624-653 (NGHSPLFYALWESHVDVLNALLQRPLNLPS). The GP-PDE domain occupies 871-1178 (IINYEPYWKS…ELLFENNIDM (308 aa)). Ser-956 is modified (phosphoserine).

As to quaternary structure, associates specifically with the PHO80-PHO85 and PCL7-PHO85 cyclin-CDK complexes, and much of this interaction is mediated through the PHO80 and PCL7 cyclin subunits. Interacts with the transcription factor PHO4. In terms of processing, phosphorylated by the cyclin-CDK PHO80-PHO85. Phosphorylation mediates the formation of a stable interaction with the cyclin-CDK and is required for function as an active inhibitor of the complex under phosphate starvation conditions.

The protein resides in the cytoplasm. It is found in the nucleus. Functionally, inhibits the kinase activity of the cyclin-CDKs PHO80-PHO85 and PCL7-PHO85 under low-phosphate conditions. The protein is Phosphate system positive regulatory protein PHO81 (PHO81) of Saccharomyces cerevisiae (strain ATCC 204508 / S288c) (Baker's yeast).